The chain runs to 223 residues: Cytidylate kinase (223 aa).

12-20 (GPAGSGKST) is a binding site for ATP.

This sequence belongs to the cytidylate kinase family. Type 1 subfamily.

The protein localises to the cytoplasm. The enzyme catalyses CMP + ATP = CDP + ADP. It carries out the reaction dCMP + ATP = dCDP + ADP. This Aster yellows witches'-broom phytoplasma (strain AYWB) protein is Cytidylate kinase.